The following is a 234-amino-acid chain: Thrombin-like enzyme ancrod (234 aa).

The 227-residue stretch at 1–227 (VIGGDECNIN…YRDWVNNVIA (227 aa)) folds into the Peptidase S1 domain. 6 cysteine pairs are disulfide-bonded: Cys7–Cys141, Cys28–Cys44, Cys78–Cys232, Cys120–Cys188, Cys152–Cys167, and Cys178–Cys203. The N-linked (GlcNAc...) asparagine glycan is linked to Asn23. His43 acts as the Charge relay system in catalysis. The N-linked (GlcNAc...) asparagine glycan is linked to Asn79. Asp88 serves as the catalytic Charge relay system. Residues Asn99 and Asn148 are each glycosylated (N-linked (GlcNAc...) asparagine). Ser182 acts as the Charge relay system in catalysis. N-linked (GlcNAc...) asparagine glycosylation is present at Asn229.

It belongs to the peptidase S1 family. Snake venom subfamily. In terms of assembly, monomer. In terms of tissue distribution, expressed by the venom gland.

It is found in the secreted. It catalyses the reaction Selective cleavage of Arg-|-Xaa bond in fibrinogen, to form fibrin, and release fibrinopeptide A. The specificity of further degradation of fibrinogen varies with species origin of the enzyme.. In terms of biological role, thrombin-like snake venom serine protease that acts as an anticoagulant. It cleaves fibrinogen (FGA) to split off the A-fibrinopeptides (A, AY and AP), but not the B-fibrinopeptide. The resulting fibrin polymers are imperfectly formed and much smaller in size (1 to 2 um long) than the fibrin polymers produced by the action of thrombin. These ancrod-induced microthrombi are friable, unstable, urea-soluble and have significantly degraded alpha chains. They do not cross-link to form thrombi. They are markedly susceptible to digestion by plasmin and are rapidly removed from circulation by either reticuloendothelial phagocytosis or normal fibrinolysis, or both. Anticoagulation through the removal of fibrinogen from the blood is rapid, occurring within hours following its administration. It does not activate plasminogen and does not degrade preformed, fully cross-linked thrombin fibrin. It also reduces the level of plasminogen activator inhibitor (PAI) and may stimulate the release of tissue plasminogen activator (PLAT) from the endothelium. The profibrinolytic effect of these 2 actions appears to be limited to local microthrombus degradation. This is Thrombin-like enzyme ancrod from Calloselasma rhodostoma (Malayan pit viper).